Reading from the N-terminus, the 210-residue chain is Orotate phosphoribosyltransferase (210 aa).

Residues R96, K100, H102, and 122–130 each bind 5-phospho-alpha-D-ribose 1-diphosphate; that span reads EDLISTGGS. S126 serves as a coordination point for orotate.

This sequence belongs to the purine/pyrimidine phosphoribosyltransferase family. PyrE subfamily. Homodimer. Mg(2+) is required as a cofactor.

The catalysed reaction is orotidine 5'-phosphate + diphosphate = orotate + 5-phospho-alpha-D-ribose 1-diphosphate. It participates in pyrimidine metabolism; UMP biosynthesis via de novo pathway; UMP from orotate: step 1/2. Its function is as follows. Catalyzes the transfer of a ribosyl phosphate group from 5-phosphoribose 1-diphosphate to orotate, leading to the formation of orotidine monophosphate (OMP). This chain is Orotate phosphoribosyltransferase, found in Streptococcus pneumoniae serotype 4 (strain ATCC BAA-334 / TIGR4).